A 183-amino-acid polypeptide reads, in one-letter code: Helofensin-2 (183 aa).

The signal sequence occupies residues Met1–Gly26. Residues Ala27–Ala64 form a C(6)C(4)C(9)C(6)CC 1; approximate repeat. A C(6)C(4)C(9)C(6)CC 2; approximate repeat occupies Arg65–Gln101. The C(6)C(4)C(9)C(6)CC 3; approximate repeat unit spans residues Arg102 to Lys139. Residues Arg140–Lys177 form a C(6)C(4)C(9)C(6)CC 4; approximate repeat.

The protein belongs to the beta-defensin family. Helofensin subfamily. In terms of tissue distribution, expressed by the mandibular venom gland.

The protein localises to the secreted. Functionally, lethal toxin which possesses an inhibitory effect on direct electrical stimulation of the isolated hemi-diaphragm of mice. Neither hemorrhagic nor hemolytic activities are detected. Phospholipase A2 activity, proteolytic activity and arginine esterolytic activity are absent. The polypeptide is Helofensin-2 (Heloderma suspectum cinctum (Banded Gila monster)).